A 530-amino-acid polypeptide reads, in one-letter code: Tyrosinase (530 aa).

The N-terminal stretch at 1-18 is a signal peptide; the sequence is MLLAALCCLLWSFRTSTG. Residues 19 to 473 lie on the Lumenal, melanosome side of the membrane; the sequence is HFPRACASSK…IKPYLEQASR (455 aa). N-linked (GlcNAc...) asparagine glycans are attached at residues Asn86, Asn111, and Asn161. Cu cation-binding residues include His180, His202, and His211. Residues Asn230 and Asn337 are each glycosylated (N-linked (GlcNAc...) asparagine). Positions 363 and 367 each coordinate Cu cation. N-linked (GlcNAc...) asparagine glycosylation is present at Asn371. Cu cation is bound at residue His390. The helical transmembrane segment at 474–494 threads the bilayer; it reads IWPWLIGAAVVGCVVTAVLGG. The Cytoplasmic portion of the chain corresponds to 495 to 530; sequence LTSLLCRRNRKQLHEEKQPLLMEKEDYHSLLYQTHL.

Belongs to the tyrosinase family. Forms an OPN3-dependent complex with DCT in response to blue light in melanocytes. Cu(2+) serves as cofactor. Glycosylated.

It localises to the melanosome membrane. The protein localises to the melanosome. It catalyses the reaction 2 L-dopa + O2 = 2 L-dopaquinone + 2 H2O. It carries out the reaction L-tyrosine + O2 = L-dopaquinone + H2O. The catalysed reaction is 2 5,6-dihydroxyindole-2-carboxylate + O2 = 2 indole-5,6-quinone-2-carboxylate + 2 H2O. Functionally, this is a copper-containing oxidase that functions in the formation of pigments such as melanins and other polyphenolic compounds. Catalyzes the initial and rate limiting step in the cascade of reactions leading to melanin production from tyrosine. In addition to hydroxylating tyrosine to DOPA (3,4-dihydroxyphenylalanine), also catalyzes the oxidation of DOPA to DOPA-quinone, and possibly the oxidation of DHI (5,6-dihydroxyindole) to indole-5,6 quinone. The polypeptide is Tyrosinase (TYR) (Canis lupus familiaris (Dog)).